The following is a 144-amino-acid chain: Galectin b (144 aa).

The 138-residue stretch at 1–138 (DHIDLEFDVG…DAVLRKLCVV (138 aa)) folds into the Galectin domain.

Its function is as follows. Lectin that binds beta-galactoside and a wide array of complex carbohydrates. The chain is Galectin b from Aplysina lactuca (Marine sponge).